Consider the following 1183-residue polypeptide: Protein deacetylase HDAC6 (1183 aa).

The interval 1-61 (MTSTGQDSST…KGKMKKLSQP (61 aa)) is disordered. Residues 18–29 (NPQSPLQDSSAT) show a composition bias toward polar residues. Residue Ser-21 is modified to Phosphoserine. Position 32 is an omega-N-methylarginine (Arg-32). A Nuclear export signal motif is present at residues 66–75 (LIVGLQGLDL). 2 histone deacetylase regions span residues 86–434 (GLVF…TLLG) and 512–830 (GLVY…SLLG). The active-site 1 is the His-215. The active-site 2 is His-641. The interval 972–1042 (ATENSANQTT…EAQEVQESEE (71 aa)) is disordered. Residues 980 to 996 (TTSGEEASGETESFGTS) show a composition bias toward low complexity. Residues Thr-990, Thr-995, and Thr-1005 each carry the phosphothreonine modification. A compositionally biased stretch (polar residues) spans 997–1008 (PSSNASKQTTGA). Position 1009 is a phosphoserine (Ser-1009). Residues 1021–1035 (ELGLSSTLELSSEAQ) are compositionally biased toward low complexity. The segment at 1079–1177 (SWCPHLMAVC…NAAHQNKFGE (99 aa)) adopts a UBP-type zinc-finger fold. Zn(2+) contacts are provided by Cys-1081, His-1083, Cys-1101, Cys-1104, Cys-1113, Cys-1116, and Cys-1121. The tract at residues 1122–1124 (SRY) is ubiquitin binding. Positions 1128, 1132, 1138, 1151, and 1154 each coordinate Zn(2+). Positions 1150-1157 (WCYLCQAY) are ubiquitin binding.

Belongs to the histone deacetylase family. HD type 2 subfamily. As to quaternary structure, forms a trimeric complex in the nucleus consisting of BANP, HDAC6 and KHDRBS1/SAM68; HDAC6 keeps KHDRBS1 in a deacetylated state which inhibits the inclusion of CD44 alternate exons. The complex is disrupted by MAPK1/MAPK3-mediated phosphorylation of BANP which results in BANP export to the cytoplasm. This facilitates acetylation of KHDRBS1 and CD44 variant exon inclusion. Interacts with SIRT2 (via both phosphorylated, unphosphorylated, active or inactive forms); the interaction is necessary for the complex to interact with alpha-tubulin. Under proteasome impairment conditions, interacts with UBD via its histone deacetylase 1 and UBP-type zinc-finger regions. Interacts with BBIP1, CBFA2T3, CYLD, DDIT3/CHOP, ZMYND15, F-actin and HDAC11. Interacts with RIPOR2; this interaction occurs during early myogenic differentiation and prevents HDAC6 to deacetylate tubulin. Interacts with AURKA; AURKA-mediated phosphorylation of HDAC6 promotes deacetylation of alpha-tubulin. Interacts with DYSF; this interaction occurs during early myogenic differentiation. Interacts with TPPP; inhibiting the tubulin deacetylase activity of HDAC6. Interacts with DYNLL1. Interacts with ATP13A2; the interaction results in recruitment of HDAC6 to lysosomes to promote CTTN deacetylation. Interacts with CCDC141 (via the N-terminal region); inhibiting the deacetylase activity of HDAC6. Interacts with IPO7; the interaction facilitates HDAC6 nuclear translocation in dental papilla cells. Requires Zn(2+) as cofactor. Phosphorylated by AURKA; phosphorylation increases HDAC6-mediated deacetylation of alpha-tubulin and subsequent disassembly of cilia. In terms of processing, ubiquitinated. Its polyubiquitination however does not lead to its degradation. Post-translationally, sumoylated in vitro.

The protein localises to the cytoplasm. It is found in the cytoskeleton. The protein resides in the nucleus. It localises to the perikaryon. Its subcellular location is the cell projection. The protein localises to the dendrite. It is found in the axon. The protein resides in the cilium. It localises to the microtubule organizing center. Its subcellular location is the centrosome. The protein localises to the cilium basal body. It carries out the reaction N(6)-acetyl-L-lysyl-[protein] + H2O = L-lysyl-[protein] + acetate. The enzyme catalyses N(6)-acetyl-L-lysyl-[alpha-tubulin] + H2O = L-lysyl-[alpha-tubulin] + acetate. It functions in the pathway protein modification; protein ubiquitination. In terms of biological role, deacetylates a wide range of non-histone substrates. Plays a central role in microtubule-dependent cell motility by mediating deacetylation of tubulin. Required for cilia disassembly via deacetylation of alpha-tubulin. Alpha-tubulin deacetylation results in destabilization of dynamic microtubules. Promotes deacetylation of CTTN, leading to actin polymerization, promotion of autophagosome-lysosome fusion and completion of autophagy. Deacetylates SQSTM1. Deacetylates peroxiredoxins PRDX1 and PRDX2, decreasing their reducing activity. Deacetylates antiviral protein RIGI in the presence of viral mRNAs which is required for viral RNA detection by RIGI. Sequentially deacetylates and polyubiquitinates DNA mismatch repair protein MSH2 which leads to MSH2 degradation, reducing cellular sensitivity to DNA-damaging agents and decreasing cellular DNA mismatch repair activities. Deacetylates DNA mismatch repair protein MLH1 which prevents recruitment of the MutL alpha complex (formed by the MLH1-PMS2 heterodimer) to the MutS alpha complex (formed by the MSH2-MSH6 heterodimer), leading to tolerance of DNA damage. Deacetylates RHOT1/MIRO1 which blocks mitochondrial transport and mediates axon growth inhibition. Deacetylates transcription factor SP1 which leads to increased expression of ENG, positively regulating angiogenesis. Deacetylates KHDRBS1/SAM68 which regulates alternative splicing by inhibiting the inclusion of CD44 alternate exons. Promotes odontoblast differentiation following IPO7-mediated nuclear import and subsequent repression of RUNX2 expression. In addition to its protein deacetylase activity, plays a key role in the degradation of misfolded proteins: when misfolded proteins are too abundant to be degraded by the chaperone refolding system and the ubiquitin-proteasome, mediates the transport of misfolded proteins to a cytoplasmic juxtanuclear structure called aggresome. Probably acts as an adapter that recognizes polyubiquitinated misfolded proteins and targets them to the aggresome, facilitating their clearance by autophagy. This chain is Protein deacetylase HDAC6, found in Rattus norvegicus (Rat).